Consider the following 279-residue polypeptide: Undecaprenyl-diphosphatase (279 aa).

Helical transmembrane passes span 2 to 22 (LFIE…TEWL), 44 to 64 (AFME…VIVI), 85 to 105 (WQLW…AVPL), 113 to 133 (FNHM…FLWI), 163 to 183 (VLSI…AIIL), 188 to 208 (TVAA…YSGL), 225 to 245 (LLVL…VIKL), and 255 to 275 (FTVF…YSVF).

Belongs to the UppP family.

It is found in the cell membrane. The enzyme catalyses di-trans,octa-cis-undecaprenyl diphosphate + H2O = di-trans,octa-cis-undecaprenyl phosphate + phosphate + H(+). Catalyzes the dephosphorylation of undecaprenyl diphosphate (UPP). Confers resistance to bacitracin. This is Undecaprenyl-diphosphatase from Streptococcus equi subsp. equi (strain 4047).